The primary structure comprises 390 residues: Pyruvate dehydrogenase E1 component subunit alpha, somatic form, mitochondrial (390 aa).

A mitochondrion-targeting transit peptide spans 1–29; that stretch reads MRKMLAAVSRVLSGASQKPASRVLVASRN. Lysine 63 is modified (N6-acetyllysine; alternate). Lysine 63 bears the N6-succinyllysine; alternate mark. Residues histidine 92, tyrosine 118, arginine 119, alanine 157, glycine 165, valine 167, aspartate 196, glycine 197, alanine 198, asparagine 225, and tyrosine 227 each contribute to the pyruvate site. 2 residues coordinate thiamine diphosphate: tyrosine 118 and arginine 119. Thiamine diphosphate-binding residues include glycine 165, valine 167, aspartate 196, glycine 197, alanine 198, and asparagine 225. Residue aspartate 196 participates in Mg(2+) binding. Residues asparagine 225 and tyrosine 227 each contribute to the Mg(2+) site. The residue at position 232 (serine 232) is a Phosphoserine; by PDK1. Lysine 244 carries the post-translational modification N6-acetyllysine; alternate. N6-succinyllysine; alternate is present on lysine 244. Position 277 is an N6-succinyllysine (lysine 277). Histidine 292 contributes to the thiamine diphosphate binding site. Serine 293 carries the phosphoserine; by PDK1, PDK2, PDK3 and PDK4 modification. Phosphoserine is present on serine 295. Serine 300 bears the Phosphoserine; by PDK1, PDK2, PDK3 and PDK4 mark. Tyrosine 301 carries the post-translational modification Phosphotyrosine. Lysine 313 is modified (N6-acetyllysine; alternate). Lysine 313 is modified (N6-succinyllysine; alternate). Residues lysine 321 and lysine 336 each carry the N6-acetyllysine modification. Residue lysine 385 is modified to N6-succinyllysine.

Heterotetramer of two PDHA1 and two PDHB subunits. The heterotetramer interacts with DLAT, and is part of the multimeric pyruvate dehydrogenase complex that contains multiple copies of pyruvate dehydrogenase (E1), dihydrolipoamide acetyltransferase (DLAT, E2) and lipoamide dehydrogenase (DLD, E3). These subunits are bound to an inner core composed of about 48 DLAT and 12 PDHX molecules. Thiamine diphosphate is required as a cofactor. Mg(2+) serves as cofactor. Post-translationally, phosphorylation at Ser-232, Ser-293 and Ser-300 by PDK family kinases inactivates the enzyme; for this phosphorylation at a single site is sufficient. Phosphorylation at Ser-293 interferes with access to active site, and thereby inactivates the enzyme. Dephosphorylation at all three sites, i.e. at Ser-232, Ser-293 and Ser-300, is required for reactivation. Acetylation alters the phosphorylation pattern. Deacetylated by SIRT3.

It localises to the mitochondrion matrix. It carries out the reaction N(6)-[(R)-lipoyl]-L-lysyl-[protein] + pyruvate + H(+) = N(6)-[(R)-S(8)-acetyldihydrolipoyl]-L-lysyl-[protein] + CO2. With respect to regulation, pyruvate dehydrogenase activity is inhibited by phosphorylation of PDHA1; it is reactivated by dephosphorylation. In terms of biological role, the pyruvate dehydrogenase complex catalyzes the overall conversion of pyruvate to acetyl-CoA and CO(2), and thereby links the glycolytic pathway to the tricarboxylic cycle. The sequence is that of Pyruvate dehydrogenase E1 component subunit alpha, somatic form, mitochondrial (PDHA1) from Pan troglodytes (Chimpanzee).